A 103-amino-acid polypeptide reads, in one-letter code: Large ribosomal subunit protein uL24 (103 aa).

Residues 70-103 (YLDPSTNEPTRLGVRREDGKRVRYAKKSGKDLEN) are disordered.

It belongs to the universal ribosomal protein uL24 family. In terms of assembly, part of the 50S ribosomal subunit.

Functionally, one of two assembly initiator proteins, it binds directly to the 5'-end of the 23S rRNA, where it nucleates assembly of the 50S subunit. Its function is as follows. One of the proteins that surrounds the polypeptide exit tunnel on the outside of the subunit. This chain is Large ribosomal subunit protein uL24, found in Lactiplantibacillus plantarum (strain ATCC BAA-793 / NCIMB 8826 / WCFS1) (Lactobacillus plantarum).